The following is a 411-amino-acid chain: Peptidase T (411 aa).

His-79 contributes to the Zn(2+) binding site. The active site involves Asp-81. Asp-142 provides a ligand contact to Zn(2+). Glu-176 (proton acceptor) is an active-site residue. Positions 177, 199, and 381 each coordinate Zn(2+).

It belongs to the peptidase M20B family. It depends on Zn(2+) as a cofactor.

It is found in the cytoplasm. The enzyme catalyses Release of the N-terminal residue from a tripeptide.. Its function is as follows. Cleaves the N-terminal amino acid of tripeptides. The polypeptide is Peptidase T (Geobacillus thermodenitrificans (strain NG80-2)).